The following is a 214-amino-acid chain: Pyridoxine/pyridoxamine 5'-phosphate oxidase (214 aa).

Substrate is bound by residues 8 to 11 (RTNY) and Lys66. FMN is bound by residues 61–66 (RIVLIK), 76–77 (FT), Arg82, Lys83, and Gln105. 3 residues coordinate substrate: Tyr123, Arg127, and Ser131. FMN-binding positions include 140-141 (QS) and Trp184. A substrate-binding site is contributed by 190–192 (RLH). Position 194 (Arg194) interacts with FMN.

This sequence belongs to the pyridoxamine 5'-phosphate oxidase family. In terms of assembly, homodimer. It depends on FMN as a cofactor.

It catalyses the reaction pyridoxamine 5'-phosphate + O2 + H2O = pyridoxal 5'-phosphate + H2O2 + NH4(+). The enzyme catalyses pyridoxine 5'-phosphate + O2 = pyridoxal 5'-phosphate + H2O2. Its pathway is cofactor metabolism; pyridoxal 5'-phosphate salvage; pyridoxal 5'-phosphate from pyridoxamine 5'-phosphate: step 1/1. The protein operates within cofactor metabolism; pyridoxal 5'-phosphate salvage; pyridoxal 5'-phosphate from pyridoxine 5'-phosphate: step 1/1. In terms of biological role, catalyzes the oxidation of either pyridoxine 5'-phosphate (PNP) or pyridoxamine 5'-phosphate (PMP) into pyridoxal 5'-phosphate (PLP). The chain is Pyridoxine/pyridoxamine 5'-phosphate oxidase from Burkholderia pseudomallei (strain 1106a).